The following is a 476-amino-acid chain: MPPSIPVPSIVTRAIPSLARAASTTTKSTPSKEHHVHSYSPEVLPLGYAVASTHASIKKKTGALDLGILVSTTDKPASAAACLTRNVFKAAPVTVTTQLLQSGGGRARGFIVNSGCANAVTGKKGLEDAWEMSNTVTSQLPPGQRGIGTLVMSTGVIGQPLPISSIISKIPELVRSLDDSPKSWLDLSKSFMTTDTFPKLRAKSFRLGERLVRIAGIDKGAGMIAPSMGPPQPPHATLLGVIATDAAISPPALQSALNYAVDRSFNNITVDGDMSTNDSIICLANGAAGKLETQGRETAESMEEITEDGHPEEYKVFREELRSFAEELAQLVVRDGEGATKFVTIRVKNAPSYETAQAVAKSIANSSLFKTAMYGEDANWGRILCAVGYTPTAQAIIPNHVSVSFIPSANVSDPTPLRLLTNGEPEANIDEDRASVILAEEDLEVEVDLGDGHEEAKVWTCDFSHEYVTINGSYRS.

6 residues coordinate substrate: Thr193, Lys219, Thr237, Glu337, Asn471, and Ser476. The active-site Nucleophile is the Thr237.

The protein belongs to the ArgJ family. As to quaternary structure, heterodimer of an alpha and a beta chain. In terms of processing, the alpha and beta chains are autoproteolytically processed from a single precursor protein within the mitochondrion.

It localises to the mitochondrion matrix. The enzyme catalyses N(2)-acetyl-L-ornithine + L-glutamate = N-acetyl-L-glutamate + L-ornithine. It catalyses the reaction L-glutamate + acetyl-CoA = N-acetyl-L-glutamate + CoA + H(+). It participates in amino-acid biosynthesis; L-arginine biosynthesis; L-ornithine and N-acetyl-L-glutamate from L-glutamate and N(2)-acetyl-L-ornithine (cyclic): step 1/1. The protein operates within amino-acid biosynthesis; L-arginine biosynthesis; N(2)-acetyl-L-ornithine from L-glutamate: step 1/4. In terms of biological role, catalyzes two activities which are involved in the cyclic version of arginine biosynthesis: the synthesis of acetylglutamate from glutamate and acetyl-CoA, and of ornithine by transacetylation between acetylornithine and glutamate. This is Arginine biosynthesis bifunctional protein ArgJ, mitochondrial from Cryptococcus neoformans var. neoformans serotype D (strain JEC21 / ATCC MYA-565) (Filobasidiella neoformans).